We begin with the raw amino-acid sequence, 453 residues long: O-methyltransferase bik3 (453 aa).

The interval 1–25 (MVSNGISNGTNGTNGTTTNGTNGVN) is disordered. Over residues 8-25 (NGTNGTNGTTTNGTNGVN) the composition is skewed to low complexity. D305 serves as a coordination point for S-adenosyl-L-methionine. H355 (proton acceptor) is an active-site residue.

The protein belongs to the class I-like SAM-binding methyltransferase superfamily. Cation-independent O-methyltransferase family. COMT subfamily.

The protein operates within secondary metabolite biosynthesis. In terms of biological role, O-methyltransferase; part of the gene cluster that mediates the biosynthesis of bikaverin, a red pigment also considered as a mycotoxin. The first stage is catalyzed by the polyketide synthase bik1, which catalyzes the formation of the intermediate SMA76a also knowm as pre-bikaverin. FAD-dependent monooxygenase bik2 might then be responsible for the oxidation of pre-bikaverin to oxo-pre-bikaverin which is in turn methylated by the O-methyltransferase bik3 to me-oxo-pre-bikaverin. A further cycle of oxydation and methylation by bik2 and bik3 leads to the final product of bikaverin, via a nor-bikaverin intermediate. The chain is O-methyltransferase bik3 from Gibberella fujikuroi (strain CBS 195.34 / IMI 58289 / NRRL A-6831) (Bakanae and foot rot disease fungus).